Reading from the N-terminus, the 72-residue chain is Long neurotoxin OH-17 (72 aa).

5 disulfide bridges follow: Cys3–Cys21, Cys14–Cys42, Cys27–Cys31, Cys46–Cys57, and Cys58–Cys63.

It belongs to the three-finger toxin family. Long-chain subfamily. Type II alpha-neurotoxin sub-subfamily. As to expression, expressed by the venom gland.

It localises to the secreted. Its function is as follows. Binds with high affinity to muscular (alpha-1/CHRNA1) and neuronal (alpha-7/CHRNA7) nicotinic acetylcholine receptor (nAChR) and inhibits acetylcholine from binding to the receptor, thereby impairing neuromuscular and neuronal transmission. This chain is Long neurotoxin OH-17, found in Ophiophagus hannah (King cobra).